A 397-amino-acid polypeptide reads, in one-letter code: MDALLALHRRSRRTVVGLMSGTSLDGVDAALVQLDGSGPDLTMNPEAFVHIPYPTALRDLIRTNTDPASSSVQDVTRLDARLAETYAAAVDRVAAEADVDRGTVDLVGAHGQTVCHLPEPADCAGKDVRATLQLGNPSTLATRLGVPVVGNFRAADLALGGQGAPLVPYFDRVAFTAPDEARGLLNLGGIANLTVLPAGAAPDDVRAFDTGPANMVIDALAARLFDAPHDPDGRHANAGTPDHDLLADLLEGEYFRREPPKSTGRNDFGPDYVDRLLGAAQSRTLSPEDTMATATLLTAASVYQAYAQYVRPEQAIDELIVSGGGVHNDTLLRMLEEAFTPIPVRPTSDYGVAPDAKEALCFAVLAHEAVNGTPTNLPSVTGASARTPLGSLSVPGP.

Position 21–28 (21–28) interacts with ATP; that stretch reads GTSLDGVD. Polar residues predominate over residues 373–384; it reads TPTNLPSVTGAS. Residues 373–397 are disordered; the sequence is TPTNLPSVTGASARTPLGSLSVPGP.

It belongs to the anhydro-N-acetylmuramic acid kinase family.

It catalyses the reaction 1,6-anhydro-N-acetyl-beta-muramate + ATP + H2O = N-acetyl-D-muramate 6-phosphate + ADP + H(+). The protein operates within amino-sugar metabolism; 1,6-anhydro-N-acetylmuramate degradation. Its pathway is cell wall biogenesis; peptidoglycan recycling. In terms of biological role, catalyzes the specific phosphorylation of 1,6-anhydro-N-acetylmuramic acid (anhMurNAc) with the simultaneous cleavage of the 1,6-anhydro ring, generating MurNAc-6-P. Is required for the utilization of anhMurNAc either imported from the medium or derived from its own cell wall murein, and thus plays a role in cell wall recycling. This chain is Anhydro-N-acetylmuramic acid kinase, found in Salinibacter ruber (strain DSM 13855 / M31).